Reading from the N-terminus, the 160-residue chain is Type IV major fimbrial protein FimA (160 aa).

A propeptide spans 1–7 (MKSLQKG) (leader sequence). The residue at position 8 (phenylalanine 8) is an N-methylphenylalanine. The chain crosses the membrane as a helical span at residues 8–28 (FTLIELMIVVAIIGILAAFAI). Cysteines 63 and 105 form a disulfide.

It belongs to the N-Me-Phe pilin family. In terms of assembly, the pili are polar flexible filaments of about 5.4 nanometers diameter and 2.5 micrometers average length; they consist of only a single polypeptide chain arranged in a helical configuration of five subunits per turn in the assembled pilus.

Its subcellular location is the fimbrium. It localises to the membrane. In terms of biological role, major component of the type IV fimbriae that plays an essential role in twitching motility, natural transformation, and protease secretion. The polypeptide is Type IV major fimbrial protein FimA (fimA) (Dichelobacter nodosus (Bacteroides nodosus)).